We begin with the raw amino-acid sequence, 155 residues long: Small ribosomal subunit protein uS7c (155 aa).

Belongs to the universal ribosomal protein uS7 family. Part of the 30S ribosomal subunit.

The protein resides in the plastid. It is found in the chloroplast. In terms of biological role, one of the primary rRNA binding proteins, it binds directly to 16S rRNA where it nucleates assembly of the head domain of the 30S subunit. The sequence is that of Small ribosomal subunit protein uS7c (rps7) from Hydrastis canadensis (Goldenseal).